The following is a 626-amino-acid chain: Chaperone protein DnaK (626 aa).

Residue threonine 197 is modified to Phosphothreonine; by autocatalysis. Over residues 595–614 the composition is skewed to low complexity; it reads QNMAQQQQAQGGAQQQNQNK. The segment at 595-626 is disordered; that stretch reads QNMAQQQQAQGGAQQQNQNKGGDDDVIDAEVE.

The protein belongs to the heat shock protein 70 family.

In terms of biological role, acts as a chaperone. The polypeptide is Chaperone protein DnaK (Nautilia profundicola (strain ATCC BAA-1463 / DSM 18972 / AmH)).